The chain runs to 589 residues: Phenylalanine--tRNA ligase beta subunit (589 aa).

Residues 302–377 enclose the B5 domain; the sequence is LEVREERISV…IAYGYNNIKK (76 aa). Residues D355, D361, E364, and D365 each contribute to the Mg(2+) site.

The protein belongs to the phenylalanyl-tRNA synthetase beta subunit family. Type 2 subfamily. As to quaternary structure, tetramer of two alpha and two beta subunits. Mg(2+) is required as a cofactor.

The protein resides in the cytoplasm. The enzyme catalyses tRNA(Phe) + L-phenylalanine + ATP = L-phenylalanyl-tRNA(Phe) + AMP + diphosphate + H(+). In Drosophila melanogaster (Fruit fly), this protein is Phenylalanine--tRNA ligase beta subunit.